The chain runs to 1585 residues: Histone acetyltransferase lsy-12 (1585 aa).

2 disordered regions span residues 1 to 37 (MGKKRKPSPERSSDEDEVSTPSPKDRTARPTAAARRE) and 279 to 491 (GPQH…DDPV). Basic and acidic residues predominate over residues 23-37 (PKDRTARPTAAARRE). Residues 279 to 296 (GPQHENVTVSENVLSTES) are compositionally biased toward polar residues. A compositionally biased stretch (basic and acidic residues) spans 302–312 (TETKRLHDSSR). Polar residues-rich tracts occupy residues 355–364 (LLSNPHSTPV) and 411–426 (SRLSALTIDTNRSNDL). The segment covering 431 to 440 (SAPSSSSAAS) has biased composition (low complexity). The span at 453 to 469 (QQRRKGNQSAARSRKIK) shows a compositional bias: basic residues. Positions 477–491 (QEDEPMELDSDDDPV) are enriched in acidic residues. Positions 544–830 (EQARLPERIH…YDPECLDWVP (287 aa)) constitute an MYST-type HAT domain. A C2HC MYST-type zinc finger spans residues 577–602 (LFICEFCFFYARSDEIMQNHAKKCML). K644 carries the post-translational modification N6-acetyllysine; by autocatalysis. 685-689 (SCIMT) is a binding site for acetyl-CoA. E720 serves as the catalytic Proton donor/acceptor. Residues S724 and K815 each contribute to the acetyl-CoA site. Composition is skewed to basic and acidic residues over residues 844–855 (SKEEIEQDEQRR) and 947–956 (VLDKSNIREE). Disordered stretches follow at residues 844-903 (SKEE…LKHE), 927-1262 (EENK…IGKS), 1286-1373 (ESTA…ASNH), and 1431-1507 (HHQF…VHPQ). Positions 977-999 (NKCNNTESEPNPSGRKTSATSSG) are enriched in polar residues. A compositionally biased stretch (acidic residues) spans 1011-1022 (TEEEEEDDDPTD). The span at 1029-1046 (DDEKPFETSVNKEKNEKS) shows a compositional bias: basic and acidic residues. Positions 1047–1060 (RRGKKVSKKRRSVA) are enriched in basic residues. Basic and acidic residues-rich tracts occupy residues 1070-1081 (VRDRDEPKKAEN) and 1135-1151 (DIPKSDEDHQSTEAYDR). Over residues 1164–1173 (PTPDSYHSSP) the composition is skewed to low complexity. Residues 1185-1194 (LMQAQQNIYQ) are compositionally biased toward polar residues. Residues 1196–1207 (NDCHFAENDSKP) show a composition bias toward basic and acidic residues. Polar residues-rich tracts occupy residues 1298–1317 (AGPSTSSHVTPQMSMINTTP) and 1324–1333 (HPNSQQQATP). Residues 1482–1493 (QHQQQQPQQPQQ) show a composition bias toward low complexity.

This sequence belongs to the MYST (SAS/MOZ) family.

It carries out the reaction L-lysyl-[protein] + acetyl-CoA = N(6)-acetyl-L-lysyl-[protein] + CoA + H(+). Functionally, probable histone acetyltransferase. Required to initiate and then maintain lateralized gene expression in the ASE sensory neurons. Involved in determining cell fate in the ASE neurons. The polypeptide is Histone acetyltransferase lsy-12 (Caenorhabditis elegans).